The sequence spans 327 residues: L-lactate dehydrogenase (327 aa).

NAD(+)-binding positions include valine 18, aspartate 39, lysine 44, tyrosine 69, and glycine 83 to alanine 84. Residues glutamine 86, arginine 92, and asparagine 124–aspartate 127 each bind substrate. NAD(+) is bound by residues alanine 122–asparagine 124 and serine 147. Aspartate 152–arginine 155 is a binding site for substrate. Beta-D-fructose 1,6-bisphosphate-binding residues include arginine 157 and histidine 172. Residue histidine 179 is the Proton acceptor of the active site. Phosphotyrosine is present on tyrosine 224. Residue threonine 233 coordinates substrate.

Belongs to the LDH/MDH superfamily. LDH family. As to quaternary structure, homotetramer.

It localises to the cytoplasm. It carries out the reaction (S)-lactate + NAD(+) = pyruvate + NADH + H(+). It functions in the pathway fermentation; pyruvate fermentation to lactate; (S)-lactate from pyruvate: step 1/1. Its activity is regulated as follows. Allosterically activated by fructose 1,6-bisphosphate (FBP). In terms of biological role, catalyzes the conversion of lactate to pyruvate. This Streptococcus pyogenes serotype M3 (strain SSI-1) protein is L-lactate dehydrogenase.